A 301-amino-acid chain; its full sequence is Lycopene elongase/hydratase (301 aa).

The tract at residues 1–20 (MSADMAAQSESGEGGDDGRA) is disordered. 9 helical membrane passes run 39-59 (FWLYLAGPVVVGVAAAASALA), 61-81 (LFGLEPVALFAYFLVPANVFL), 110-130 (PVNTVVVAASGLLGVGLFAVA), 133-153 (VAWPWLAAHFFLAVEYSAPPF), 160-180 (LLDSVSNGLYVLPGVAAYAAV), 186-206 (PMLAVAGAWLWTMGMHTFSAI), 229-249 (TYWYCAATWVLAAVAFAAVDL), 252-272 (GALLAAYPVVVLGIVAAGVDV), and 276-296 (YWWYPVINTVVGMLITLGALW).

The protein belongs to the UbiA prenyltransferase family.

The protein resides in the cell membrane. The catalysed reaction is all-trans-lycopene + dimethylallyl diphosphate + H2O = dihydroisopentenyldehydrorhodopin + diphosphate. It catalyses the reaction isopentenyldehydrorhodopin + dimethylallyl diphosphate + H2O = dihydrobisanhydrobacterioruberin + diphosphate. It functions in the pathway carotenoid biosynthesis. In terms of biological role, involved in the biosynthesis of the acyclic C50 carotenoid bacterioruberin (BR). Acts as a bifunctional elongase/hydratase that catalyzes the elongation of lycopene by attaching a C(5) isoprene unit at C-2, as well as the hydroxylation of the previous end of the molecule. The enzyme acts at both ends of the substrate, and catalyzes the conversion of lycopene to the C(45) intermediate dihydroisopentenyldehydrorhodopin (DH-IDR) and the conversion of isopentenyldehydrorhodopin (IDR) to the C(50) carotenoid dihydrobisanhydrobacterioruberin (DH-BABR). Can also catalyze the conversion of lycopene to tetrahydrobisanhydrobacterioruberin (TH-BABR). The chain is Lycopene elongase/hydratase from Haloferax volcanii (strain ATCC 29605 / DSM 3757 / JCM 8879 / NBRC 14742 / NCIMB 2012 / VKM B-1768 / DS2) (Halobacterium volcanii).